A 108-amino-acid polypeptide reads, in one-letter code: uncharacterized protein (108 aa).

A compositionally biased stretch (polar residues) spans 1 to 12 (MSNQQKQLQLPS). The tract at residues 1–22 (MSNQQKQLQLPSASIKKPKEKQ) is disordered.

This is an uncharacterized protein from Dictyostelium discoideum (Social amoeba).